We begin with the raw amino-acid sequence, 350 residues long: 3-isopropylmalate dehydrogenase (350 aa).

Glycine 71–glutamate 84 is a binding site for NAD(+). Arginine 91, arginine 101, arginine 129, and aspartate 220 together coordinate substrate. Aspartate 220, aspartate 244, and aspartate 248 together coordinate Mg(2+). An NAD(+)-binding site is contributed by glycine 279–asparagine 291.

The protein belongs to the isocitrate and isopropylmalate dehydrogenases family. LeuB type 1 subfamily. In terms of assembly, homodimer. The cofactor is Mg(2+). Requires Mn(2+) as cofactor.

The protein localises to the cytoplasm. It carries out the reaction (2R,3S)-3-isopropylmalate + NAD(+) = 4-methyl-2-oxopentanoate + CO2 + NADH. Its pathway is amino-acid biosynthesis; L-leucine biosynthesis; L-leucine from 3-methyl-2-oxobutanoate: step 3/4. Its function is as follows. Catalyzes the oxidation of 3-carboxy-2-hydroxy-4-methylpentanoate (3-isopropylmalate) to 3-carboxy-4-methyl-2-oxopentanoate. The product decarboxylates to 4-methyl-2 oxopentanoate. The chain is 3-isopropylmalate dehydrogenase from Caulobacter vibrioides (strain ATCC 19089 / CIP 103742 / CB 15) (Caulobacter crescentus).